Reading from the N-terminus, the 409-residue chain is Adenosine deaminase (409 aa).

Zn(2+) is bound by residues His65, His67, His207, and Asp314.

Belongs to the metallo-dependent hydrolases superfamily. It depends on Zn(2+) as a cofactor.

It catalyses the reaction adenosine + H2O + H(+) = inosine + NH4(+). Catalyzes the deamination of adenosine into inosine. Is also able to deaminate adenine, but with considerably less efficiency. Is not active toward 6-chloroadenine. The chain is Adenosine deaminase from Helicobacter pylori (strain ATCC 700392 / 26695) (Campylobacter pylori).